We begin with the raw amino-acid sequence, 610 residues long: UvrABC system protein C (610 aa).

The GIY-YIG domain maps to 16 to 94 (SQPGVYRMYD…IKLYQPRYNV (79 aa)). One can recognise a UVR domain in the interval 204 to 239 (DQVLTQLIARMEKASQDLAFEEAARIRDQIQAVRRV).

This sequence belongs to the UvrC family. In terms of assembly, interacts with UvrB in an incision complex.

The protein resides in the cytoplasm. Its function is as follows. The UvrABC repair system catalyzes the recognition and processing of DNA lesions. UvrC both incises the 5' and 3' sides of the lesion. The N-terminal half is responsible for the 3' incision and the C-terminal half is responsible for the 5' incision. This Salmonella heidelberg (strain SL476) protein is UvrABC system protein C.